We begin with the raw amino-acid sequence, 479 residues long: UDP-N-acetylmuramate--L-alanine ligase (479 aa).

Position 127–133 (127–133) interacts with ATP; that stretch reads GTHGKTT.

This sequence belongs to the MurCDEF family.

It localises to the cytoplasm. It carries out the reaction UDP-N-acetyl-alpha-D-muramate + L-alanine + ATP = UDP-N-acetyl-alpha-D-muramoyl-L-alanine + ADP + phosphate + H(+). The protein operates within cell wall biogenesis; peptidoglycan biosynthesis. Its function is as follows. Cell wall formation. This Shewanella denitrificans (strain OS217 / ATCC BAA-1090 / DSM 15013) protein is UDP-N-acetylmuramate--L-alanine ligase.